The chain runs to 247 residues: Aliphatic sulfonates import ATP-binding protein SsuB 3 (247 aa).

In terms of domain architecture, ABC transporter spans 28-242; it reads VSVRGLQRRY…ALRSILLEEL (215 aa). Position 60–67 (60–67) interacts with ATP; the sequence is GESGCGKT.

It belongs to the ABC transporter superfamily. Aliphatic sulfonates importer (TC 3.A.1.17.2) family. In terms of assembly, the complex is composed of two ATP-binding proteins (SsuB), two transmembrane proteins (SsuC) and a solute-binding protein (SsuA).

It localises to the cell inner membrane. It carries out the reaction ATP + H2O + aliphatic sulfonate-[sulfonate-binding protein]Side 1 = ADP + phosphate + aliphatic sulfonateSide 2 + [sulfonate-binding protein]Side 1.. Part of the ABC transporter complex SsuABC involved in aliphatic sulfonates import. Responsible for energy coupling to the transport system. This Paraburkholderia xenovorans (strain LB400) protein is Aliphatic sulfonates import ATP-binding protein SsuB 3.